The following is a 92-amino-acid chain: Small ribosomal subunit protein bS20 (92 aa).

The interval 1–20 (MANIASAKKRARQAENNRAH) is disordered.

This sequence belongs to the bacterial ribosomal protein bS20 family.

Functionally, binds directly to 16S ribosomal RNA. The protein is Small ribosomal subunit protein bS20 of Methylococcus capsulatus (strain ATCC 33009 / NCIMB 11132 / Bath).